The primary structure comprises 345 residues: KRR1 small subunit processome component homolog (345 aa).

A KH domain is found at 125–193 (DIIKIGNLVH…VRDIVLETMN (69 aa)). The span at 232 to 245 (NISKRKQPKVKKQK) shows a compositional bias: basic residues. Disordered stretches follow at residues 232-260 (NISK…ESKV) and 273-329 (QEQK…VDVK). The stretch at 270 to 298 (FLNQEQKQAKRNQERTEKQKEAAKRQDER) forms a coiled coil. Composition is skewed to basic and acidic residues over residues 276–302 (KQAK…RNKD) and 315–329 (LKKE…VDVK).

It belongs to the KRR1 family. As to quaternary structure, monomer. Component of the ribosomal small subunit (SSU) processome.

The protein resides in the nucleus. It is found in the nucleolus. Its function is as follows. Required for 40S ribosome biogenesis. Involved in nucleolar processing of pre-18S ribosomal RNA and ribosome assembly. Binds to RNA. Required for female germline development, cell viability during eye development and for survival of dividing cells and epithelial cells during early wing disk development. The protein is KRR1 small subunit processome component homolog of Drosophila erecta (Fruit fly).